The following is a 297-amino-acid chain: Cytosolic Fe-S cluster assembly factor CFD1 (297 aa).

ATP is bound at residue 15–22 (GKGGVGKS). Residues Cys-216 and Cys-219 each coordinate [4Fe-4S] cluster.

The protein belongs to the Mrp/NBP35 ATP-binding proteins family. NUBP2/CFD1 subfamily. As to quaternary structure, heterotetramer of 2 NBP35 and 2 CFD1 chains. It depends on [4Fe-4S] cluster as a cofactor.

It localises to the cytoplasm. Component of the cytosolic iron-sulfur (Fe/S) protein assembly (CIA) machinery. Required for maturation of extramitochondrial Fe-S proteins. The NBP35-CFD1 heterotetramer forms a Fe-S scaffold complex, mediating the de novo assembly of an Fe-S cluster and its transfer to target apoproteins. In Phaeosphaeria nodorum (strain SN15 / ATCC MYA-4574 / FGSC 10173) (Glume blotch fungus), this protein is Cytosolic Fe-S cluster assembly factor CFD1.